A 198-amino-acid chain; its full sequence is Recombination protein RecR (198 aa).

A C4-type zinc finger spans residues C59 to C74. In terms of domain architecture, Toprim spans T82–P175.

It belongs to the RecR family.

Functionally, may play a role in DNA repair. It seems to be involved in an RecBC-independent recombinational process of DNA repair. It may act with RecF and RecO. The sequence is that of Recombination protein RecR from Desulfitobacterium hafniense (strain Y51).